The following is a 206-amino-acid chain: Small ribosomal subunit protein uS4 (206 aa).

Positions 96 to 156 (GRLDNVVYRM…EKAKKQSRVK (61 aa)) constitute an S4 RNA-binding domain.

This sequence belongs to the universal ribosomal protein uS4 family. Part of the 30S ribosomal subunit. Contacts protein S5. The interaction surface between S4 and S5 is involved in control of translational fidelity.

One of the primary rRNA binding proteins, it binds directly to 16S rRNA where it nucleates assembly of the body of the 30S subunit. Its function is as follows. With S5 and S12 plays an important role in translational accuracy. This Enterobacter sp. (strain 638) protein is Small ribosomal subunit protein uS4.